The chain runs to 147 residues: Organic hydroperoxide resistance transcriptional regulator (147 aa).

Positions 11-141 (ENQLCFLLYA…LKSALYTLLE (131 aa)) constitute an HTH marR-type domain. Cysteine sulfenic acid (-SOH); alternate is present on cysteine 15. S-bacillithiol cysteine disulfide; alternate is present on cysteine 15. Cysteine 15 is subject to S-cysteinyl cysteine; alternate. Positions 15 to 16 (CF) form a cross-link, n,N-(cysteine-1,S-diyl)phenylalanine (Cys-Phe); alternate. A DNA-binding region (H-T-H motif) is located at residues 57-80 (VKKMGEQLYLDSGTLTPMLKRMEQ).

Homodimer. Cys-15 is oxidized by organic peroxides to cysteine sulfenic acid (Cys-SOH). This can react with the alpha-amido of the following residue to form the sulfenamide cross-link. Oxidation or cross-linking results in the loss of DNA-binding activity and the inactivation of repressor function. Both the cysteine sulfenic acid and the sulfenamide cross-link can react with free cysteine or bacillithiol (BSH) to form mixed disulfides. Further reduction of OhrR by free sulfhydryl compounds restores repressor activity.

It localises to the cytoplasm. Inactivated by oxidation of Cys-15 to a sulfenic acid. Functionally, organic peroxide sensor. Represses the expression of the peroxide-inducible gene ohrA by cooperative binding to two inverted repeat elements. The protein is Organic hydroperoxide resistance transcriptional regulator (ohrR) of Bacillus subtilis (strain 168).